Consider the following 276-residue polypeptide: Shikimate dehydrogenase (NADP(+)) (276 aa).

Residues 15 to 17 (SKS) and threonine 62 each bind shikimate. Residue lysine 66 is the Proton acceptor of the active site. Residue glutamate 78 coordinates NADP(+). Residues asparagine 87 and aspartate 103 each coordinate shikimate. Residues 127–131 (GAGGV), 150–155 (NRTHIK), and methionine 214 each bind NADP(+). A shikimate-binding site is contributed by tyrosine 216. Glycine 239 contributes to the NADP(+) binding site.

The protein belongs to the shikimate dehydrogenase family. As to quaternary structure, homodimer.

It carries out the reaction shikimate + NADP(+) = 3-dehydroshikimate + NADPH + H(+). It functions in the pathway metabolic intermediate biosynthesis; chorismate biosynthesis; chorismate from D-erythrose 4-phosphate and phosphoenolpyruvate: step 4/7. Its function is as follows. Involved in the biosynthesis of the chorismate, which leads to the biosynthesis of aromatic amino acids. Catalyzes the reversible NADPH linked reduction of 3-dehydroshikimate (DHSA) to yield shikimate (SA). The sequence is that of Shikimate dehydrogenase (NADP(+)) from Haemophilus ducreyi (strain 35000HP / ATCC 700724).